Here is a 377-residue protein sequence, read N- to C-terminus: Probable dehydratase NIT22 (377 aa).

2 residues coordinate NADP(+): Lys101 and Arg196. The disordered stretch occupies residues Glu220–Phe243. One can recognise a MaoC-like domain in the interval Pro233 to Lys332. NADP(+)-binding residues include Thr265 and Ile287.

This sequence belongs to the short-chain dehydrogenases/reductases (SDR) family.

Its pathway is siderophore biosynthesis. Its function is as follows. Probable dehydratase; part of the gene cluster that mediates the biosynthesis of hydroxamate-containing siderophores that play a critical role in virulence via intracellular iron acquisition during macrophage infection. This Ajellomyces capsulatus (Darling's disease fungus) protein is Probable dehydratase NIT22.